The following is a 150-amino-acid chain: Nucleoside diphosphate kinase (150 aa).

ATP is bound by residues lysine 9, phenylalanine 57, arginine 85, threonine 91, arginine 102, and asparagine 112. Histidine 115 functions as the Pros-phosphohistidine intermediate in the catalytic mechanism.

Belongs to the NDK family. The cofactor is Mg(2+).

It is found in the cytoplasm. The enzyme catalyses a 2'-deoxyribonucleoside 5'-diphosphate + ATP = a 2'-deoxyribonucleoside 5'-triphosphate + ADP. It carries out the reaction a ribonucleoside 5'-diphosphate + ATP = a ribonucleoside 5'-triphosphate + ADP. Functionally, major role in the synthesis of nucleoside triphosphates other than ATP. The ATP gamma phosphate is transferred to the NDP beta phosphate via a ping-pong mechanism, using a phosphorylated active-site intermediate. The sequence is that of Nucleoside diphosphate kinase from Methanoregula boonei (strain DSM 21154 / JCM 14090 / 6A8).